The primary structure comprises 180 residues: 6,7-dimethyl-8-ribityllumazine synthase (180 aa).

5-amino-6-(D-ribitylamino)uracil contacts are provided by residues Phe-23, 61-63 (SFE), and 85-87 (AVI). 90 to 91 (QT) is a binding site for (2S)-2-hydroxy-3-oxobutyl phosphate. His-93 acts as the Proton donor in catalysis. Phe-118 is a 5-amino-6-(D-ribitylamino)uracil binding site. Position 132 (Arg-132) interacts with (2S)-2-hydroxy-3-oxobutyl phosphate.

Belongs to the DMRL synthase family.

The enzyme catalyses (2S)-2-hydroxy-3-oxobutyl phosphate + 5-amino-6-(D-ribitylamino)uracil = 6,7-dimethyl-8-(1-D-ribityl)lumazine + phosphate + 2 H2O + H(+). It functions in the pathway cofactor biosynthesis; riboflavin biosynthesis; riboflavin from 2-hydroxy-3-oxobutyl phosphate and 5-amino-6-(D-ribitylamino)uracil: step 1/2. Catalyzes the formation of 6,7-dimethyl-8-ribityllumazine by condensation of 5-amino-6-(D-ribitylamino)uracil with 3,4-dihydroxy-2-butanone 4-phosphate. This is the penultimate step in the biosynthesis of riboflavin. The chain is 6,7-dimethyl-8-ribityllumazine synthase from Gloeobacter violaceus (strain ATCC 29082 / PCC 7421).